Reading from the N-terminus, the 266-residue chain is MARGFIDCHCHISASEFTTDTDDVLLRAKKAGVKALVAVTEGASEFEKVIQLSKTYPGFVFPCFGIHPLQGSGQDLHSVRVQDLDPFLYLFQTYKDDIVAIGEIGLDFTPWYSSITQERDEQMKVFIKQLEISKELDLPVNVHSRSSAKVTIATMKELGIRQALLHNFAGKPSVAMEGVQAGFCFSFPPAVSKNEQRAKLIRQIPLEHVCLETDSPALGLDKHVRNEPSNVTISCEYIAKVKGISSDVVMEVTTQNALRLFSKLKI.

His-9, His-11, Glu-103, His-143, His-166, and Asp-214 together coordinate Zn(2+).

Belongs to the metallo-dependent hydrolases superfamily. TatD-type hydrolase family. It depends on Mn(2+) as a cofactor. Ca(2+) is required as a cofactor. The cofactor is Mg(2+). Zn(2+) serves as cofactor.

It is found in the nucleus. With respect to regulation, the 3'-exonuclease activity is sensitive to the metal ion present in the active site, whereas the AP endodeoxyribonuclease activity is observed in a variety of divalent metal cofactors. 3'-exoxonuclease activity is suppressed in the presence of Ca(2+), Zn(2+) and Ni(2+). Functionally, exhibits 3'-exonuclease activities and apurinic/apyrimidinic (AP) endonuclease (in vitro). Show preferential AP endonuclease activity on double-stranded DNA substrates and 3'- exonuclease activity on single-stranded DNA. This is Putative deoxyribonuclease tatdn3 (tatdn3) from Danio rerio (Zebrafish).